The following is a 129-amino-acid chain: Large ribosomal subunit protein uL14m (129 aa).

Belongs to the universal ribosomal protein uL14 family.

Its subcellular location is the mitochondrion. This is Large ribosomal subunit protein uL14m (RPL14) from Acanthamoeba castellanii (Amoeba).